A 212-amino-acid polypeptide reads, in one-letter code: High frequency lysogenization protein HflD homolog (212 aa).

This sequence belongs to the HflD family.

It localises to the cytoplasm. Its subcellular location is the cell inner membrane. The sequence is that of High frequency lysogenization protein HflD homolog from Stutzerimonas stutzeri (strain A1501) (Pseudomonas stutzeri).